We begin with the raw amino-acid sequence, 281 residues long: N-acetylmuramic acid 6-phosphate etherase (281 aa).

An SIS domain is found at 63–226; sequence IVPRMKQGGR…TTSVMIQLGR (164 aa). The Proton donor role is filled by Glu-91. Glu-122 is a catalytic residue.

The protein belongs to the GCKR-like family. MurNAc-6-P etherase subfamily. In terms of assembly, homodimer.

The enzyme catalyses N-acetyl-D-muramate 6-phosphate + H2O = N-acetyl-D-glucosamine 6-phosphate + (R)-lactate. The protein operates within amino-sugar metabolism; N-acetylmuramate degradation. Specifically catalyzes the cleavage of the D-lactyl ether substituent of MurNAc 6-phosphate, producing GlcNAc 6-phosphate and D-lactate. The chain is N-acetylmuramic acid 6-phosphate etherase from Bacteroides fragilis (strain YCH46).